A 479-amino-acid polypeptide reads, in one-letter code: Anaerobic nitric oxide reductase flavorubredoxin (479 aa).

The tract at residues 30 to 210 (LRGSSYNSYL…PFSRLVTPKI (181 aa)) is zinc metallo-hydrolase. 6 residues coordinate Fe cation: His79, Glu81, Asp83, His147, Asp166, and His227. The Flavodoxin-like domain maps to 254–393 (ITIFYDTMSN…LCRQHGRDIA (140 aa)). FMN is bound by residues 260 to 264 (TMSNN) and 342 to 369 (AFGS…EMSL). The 52-residue stretch at 423–474 (GPKMQCSVCQWIYDPALGEPLQDVAPGTPWSDVPDNFLCPECSLGKDVFDVL) folds into the Rubredoxin-like domain. The Fe cation site is built by Cys428, Cys431, Cys461, and Cys464.

The protein in the N-terminal section; belongs to the zinc metallo-hydrolase group 3 family. As to quaternary structure, homotetramer. Fe cation is required as a cofactor. The cofactor is FMN.

The protein resides in the cytoplasm. It participates in nitrogen metabolism; nitric oxide reduction. In terms of biological role, anaerobic nitric oxide reductase; uses NADH to detoxify nitric oxide (NO), protecting several 4Fe-4S NO-sensitive enzymes. Has at least 2 reductase partners, only one of which (NorW, flavorubredoxin reductase) has been identified. NO probably binds to the di-iron center; electrons enter from the NorW at rubredoxin and are transferred sequentially to the FMN center and the di-iron center. Also able to function as an aerobic oxygen reductase. This Salmonella typhi protein is Anaerobic nitric oxide reductase flavorubredoxin.